Here is a 399-residue protein sequence, read N- to C-terminus: Leu/Ile/Val-binding protein homolog 7 (399 aa).

The first 22 residues, Met-1–Ala-22, serve as a signal peptide directing secretion.

Belongs to the leucine-binding protein family.

Functionally, component of an amino-acid transport system. The polypeptide is Leu/Ile/Val-binding protein homolog 7 (Brucella abortus (strain 2308)).